The sequence spans 71 residues: DNA-directed RNA polymerases I, II, and III subunit RPABC5 (71 aa).

Residues C7, C10, C44, and C45 each coordinate Zn(2+).

It belongs to the archaeal Rpo10/eukaryotic RPB10 RNA polymerase subunit family. As to quaternary structure, component of the RNA polymerase I (Pol I), RNA polymerase II (Pol II) and RNA polymerase III (Pol III) complexes consisting of at least 13, 12 and 17 subunits, respectively.

It localises to the nucleus. Its function is as follows. DNA-dependent RNA polymerase catalyzes the transcription of DNA into RNA using the four ribonucleoside triphosphates as substrates. Common component of RNA polymerases I, II and III which synthesize ribosomal RNA precursors, mRNA precursors and many functional non-coding RNAs, and a small RNAs, such as 5S rRNA and tRNAs, respectively. Pol II is the central component of the basal RNA polymerase II transcription machinery. Pols are composed of mobile elements that move relative to each other. In Pol II, RBP10 is part of the core element with the central large cleft. This is DNA-directed RNA polymerases I, II, and III subunit RPABC5 from Brassica napus (Rape).